A 790-amino-acid polypeptide reads, in one-letter code: Pentatricopeptide repeat-containing protein At1g25360 (790 aa).

PPR repeat units lie at residues 48 to 82 (RAHILNRLIDVYCKSSELNYARQLFDEISEPDKIA), 84 to 109 (TTMVSGYCASGDITLARGVFEKAPVC), 112 to 146 (DTVMYNAMITGFSHNNDGYSAINLFCKMKHEGFKP), 147 to 182 (DNFTFASVLAGLALVADDEKQCVQFHAAALKSGAGY), 183 to 217 (ITSVSNALVSVYSKCASSPSLLHSARKVFDEILEK), 218 to 248 (DERSWTTMMTGYVKNGYFDLGEELLEGMDDN), 250 to 284 (KLVAYNAMISGYVNRGFYQEALEMVRRMVSSGIEL), 285 to 315 (DEFTYPSVIRACATAGLLQLGKQVHAYVLRR), 319 to 349 (SFHFDNSLVSLYYKCGKFDEARAIFEKMPAK), 350 to 384 (DLVSWNALLSGYVSSGHIGEAKLIFKEMKEKNILS), 385 to 415 (WMIMISGLAENGFGEEGLKLFSCMKREGFEP), 416 to 450 (CDYAFSGAIKSCAVLGAYCNGQQYHAQLLKIGFDS), 451 to 481 (SLSAGNALITMYAKCGVVEEARQVFRTMPCL), 482 to 516 (DSVSWNALIAALGQHGHGAEAVDVYEEMLKKGIRP), 517 to 551 (DRITLLTVLTACSHAGLVDQGRKYFDSMETVYRIP), and 553 to 583 (GADHYARLIDLLCRSGKFSDAESVIESLPFK). Residues 588 to 663 (IWEALLSGCR…EVACSWIEME (76 aa)) form a type E motif region. The type E(+) motif stretch occupies residues 664 to 694 (TQVHTFLVDDTSHPEAEAVYIYLQDLGKEMR). Residues 695 to 790 (RLGYVPDTSF…NGECSCGNFW (96 aa)) are type DYW motif.

It belongs to the PPR family. PCMP-H subfamily.

This is Pentatricopeptide repeat-containing protein At1g25360 (PCMP-H74) from Arabidopsis thaliana (Mouse-ear cress).